Reading from the N-terminus, the 102-residue chain is Small ribosomal subunit protein uS10 (102 aa).

The protein belongs to the universal ribosomal protein uS10 family. Part of the 30S ribosomal subunit.

Involved in the binding of tRNA to the ribosomes. The protein is Small ribosomal subunit protein uS10 of Geobacillus kaustophilus (strain HTA426).